Here is a 444-residue protein sequence, read N- to C-terminus: Cell wall mannoprotein PST1 (444 aa).

The N-terminal stretch at 1-19 (MQLHSLIASTALLITSALA) is a signal peptide. Asparagine 57, asparagine 76, asparagine 83, asparagine 86, asparagine 196, asparagine 210, asparagine 228, asparagine 235, asparagine 242, asparagine 263, asparagine 268, asparagine 280, asparagine 292, asparagine 305, and asparagine 329 each carry an N-linked (GlcNAc...) asparagine glycan. Composition is skewed to low complexity over residues 359 to 381 (SVKL…SKSS) and 395 to 418 (KAAA…SSKG). The interval 359 to 418 (SVKLSSTSKSQSSQTTAKVSKSSSKAEEKKFTSGDIKAAASASSVSSSGASSSSSKSSKG) is disordered. Asparagine 419 carries GPI-anchor amidated asparagine lipidation. The propeptide at 420–444 (AAIMAPIGQTTPLVGLLTAIIMSIM) is removed in mature form.

The protein belongs to the SPS2 family. Extensively N- and O-mannosylated.

The protein localises to the cell membrane. Its subcellular location is the secreted. It localises to the cell wall. Functionally, has a partially redundant function to ECM33 in cell wall integrity. May be involved in a repair mechanism activated in response to cell wall damage. This Saccharomyces cerevisiae (strain ATCC 204508 / S288c) (Baker's yeast) protein is Cell wall mannoprotein PST1 (PST1).